The following is a 574-amino-acid chain: Urease subunit alpha (574 aa).

Residues Gly131–Ile574 form the Urease domain. 3 residues coordinate Ni(2+): His136, His138, and Lys219. N6-carboxylysine is present on Lys219. Residue His221 coordinates substrate. Ni(2+)-binding residues include His248 and His274. His322 (proton donor) is an active-site residue. Asp362 is a binding site for Ni(2+).

Belongs to the metallo-dependent hydrolases superfamily. Urease alpha subunit family. As to quaternary structure, heterotrimer of UreA (gamma), UreB (beta) and UreC (alpha) subunits. Three heterotrimers associate to form the active enzyme. Ni cation serves as cofactor. Carboxylation allows a single lysine to coordinate two nickel ions.

Its subcellular location is the cytoplasm. It catalyses the reaction urea + 2 H2O + H(+) = hydrogencarbonate + 2 NH4(+). The protein operates within nitrogen metabolism; urea degradation; CO(2) and NH(3) from urea (urease route): step 1/1. The polypeptide is Urease subunit alpha (Prochlorococcus marinus (strain MIT 9303)).